Here is a 238-residue protein sequence, read N- to C-terminus: Ribosomal RNA small subunit methyltransferase G (238 aa).

Residues Gly-106, Leu-111, 157 to 158, and Arg-170 contribute to the S-adenosyl-L-methionine site; that span reads IE.

The protein belongs to the methyltransferase superfamily. RNA methyltransferase RsmG family.

It localises to the cytoplasm. The catalysed reaction is guanosine(527) in 16S rRNA + S-adenosyl-L-methionine = N(7)-methylguanosine(527) in 16S rRNA + S-adenosyl-L-homocysteine. Its function is as follows. Specifically methylates the N7 position of guanine in position 527 of 16S rRNA. The protein is Ribosomal RNA small subunit methyltransferase G of Psychrobacter cryohalolentis (strain ATCC BAA-1226 / DSM 17306 / VKM B-2378 / K5).